The sequence spans 621 residues: MSSHSKQALPAITVAAIGVVFGDIGTSPLYALKEIFNGHHPIPVTPENILGVLSLVFWAIIVLVTIKYVAIIMRADNRGEGGSLALLALVTERAKNPRLSWIITLLGIFAAALFYGDSMITPAISVLSAVEGLEIITPDLKSYVIPITLGILTGLFFIQKHGTGAVGKLFGPVMVAWFGILAILGLKEIAYNPAVLLALNPLFAIVFVAEHTGLAFLALGSVVLAVTGGEALYTDMGHFGRFPIRLAWFGFVMPALVLNYFGQGALLLIEPEAIASPFFHLAPDWALIPMVGLATAATVIASQAVISGAFSVARQSIQMGLLPRMQIIHTSGMEEGQIYVPFTNWSLYLAVIALVIGFKNSSNLAAAYGIAVTGTMLIDTILVAFVMVLMWKWNKLLVALVAGTLLLVDIAFFAANAIKIPEGGWFPLAMGLVSFTVLTTWRRGRRMVSEEMAKQSIPMSDFLQSIDDVHRIYGTAIFMTSAKDGVPPALLHNLKHNQVLHERVVLVTVQTTDTPTVNDMERIYLHRMQKGFMRLIVRYGFMESPDIPGALELCKGHGERFDMMETTFYLSRETIVPSMARGMLPWRARLFAVMSKNATSASDFFHIPTNRVVELGTQLVI.

The next 12 helical transmembrane spans lie at 12–32, 52–72, 101–121, 138–158, 166–186, 213–233, 249–269, 286–306, 338–358, 370–390, 396–416, and 420–440; these read ITVA…LYAL, VLSL…VAII, WIIT…SMIT, PDLK…LFFI, VGKL…ILGL, GLAF…EALY, FGFV…LLLI, ALIP…QAVI, IYVP…VIGF, IAVT…MVLM, LLVA…FAAN, and IPEG…VLTT.

This sequence belongs to the HAK/KUP transporter (TC 2.A.72) family.

The protein localises to the cell inner membrane. It carries out the reaction K(+)(in) + H(+)(in) = K(+)(out) + H(+)(out). Functionally, transport of potassium into the cell. Likely operates as a K(+):H(+) symporter. The chain is Probable potassium transport system protein Kup 2 from Dechloromonas aromatica (strain RCB).